A 648-amino-acid chain; its full sequence is Threonine--tRNA ligase (648 aa).

Residues 1–62 (MVEIILPDGS…PHGAQVAIIT (62 aa)) form the TGS domain. The tract at residues 243–536 (DHRRIGKDLD…LVEHYAGWFP (294 aa)) is catalytic. Cys336, His387, and His513 together coordinate Zn(2+).

The protein belongs to the class-II aminoacyl-tRNA synthetase family. Homodimer. It depends on Zn(2+) as a cofactor.

It localises to the cytoplasm. The catalysed reaction is tRNA(Thr) + L-threonine + ATP = L-threonyl-tRNA(Thr) + AMP + diphosphate + H(+). Catalyzes the attachment of threonine to tRNA(Thr) in a two-step reaction: L-threonine is first activated by ATP to form Thr-AMP and then transferred to the acceptor end of tRNA(Thr). Also edits incorrectly charged L-seryl-tRNA(Thr). The protein is Threonine--tRNA ligase of Magnetococcus marinus (strain ATCC BAA-1437 / JCM 17883 / MC-1).